We begin with the raw amino-acid sequence, 661 residues long: NUAK family SNF1-like kinase 1 (661 aa).

Met1 carries the post-translational modification N-acetylmethionine. A disordered region spans residues 1 to 24 (MEGAAAPVAGDRPDLGLGAPGSPR). The residue at position 22 (Ser22) is a Phosphoserine. Positions 55–306 (YELQETLGKG…IEDIANHWWV (252 aa)) constitute a Protein kinase domain. ATP contacts are provided by residues 61-69 (LGKGTYGKV) and Lys84. Residue Asp178 is the Proton acceptor of the active site. Thr211 is modified (phosphothreonine; by LKB1). Disordered regions lie at residues 345–421 (TEAK…EGVV) and 442–570 (LPSS…RPSS). The segment covering 393-404 (SSKRPKGILKKR) has biased composition (basic residues). The GILK motif signature appears at 399–402 (GILK). Ser455 is subject to Phosphoserine. The span at 518-529 (SCRRKGILKHSS) shows a compositional bias: basic residues. Ser600 carries the phosphoserine; by PKB/AKT1 modification.

The protein belongs to the protein kinase superfamily. CAMK Ser/Thr protein kinase family. SNF1 subfamily. Interacts (via GILK motif) with PPP1CB; the interaction is direct and bridges NUAK1 and PPP1R12A. Interacts with CDKN1A. It depends on Mg(2+) as a cofactor. Post-translationally, ubiquitinated with 'Lys-29'- and 'Lys-33'-linked polyubiquitins which appear to impede LKB1-mediated phosphorylation. Deubiquitinated by USP9X. In terms of processing, phosphorylated at Thr-211 by STK11/LKB1 in complex with STE20-related adapter-alpha (STRADA) pseudo kinase and CAB39. Not dephosphorylated by the myosin PP1 complex when regulating its activity, due to the presence of PPP1R12A, which prevents myosin PP1 from dephosphorylating NUAK1. Phosphorylated by STK38L upon stimulation with IGF1. Expressed at high levels in heart and brain, and at lower levels in skeletal muscle, kidney, ovary, placenta, lung and liver. Highly up-regulated in colorectal cancer cell lines.

The protein localises to the nucleus. The protein resides in the cytoplasm. The enzyme catalyses L-seryl-[protein] + ATP = O-phospho-L-seryl-[protein] + ADP + H(+). It catalyses the reaction L-threonyl-[protein] + ATP = O-phospho-L-threonyl-[protein] + ADP + H(+). Its activity is regulated as follows. Activated by phosphorylation on Thr-211. Activated by phosphorylation at Ser-600 AKT1 during glucose starvation; the relevance of such activation in normal cells is however unsure. Serine/threonine-protein kinase involved in various processes such as cell adhesion, regulation of cell ploidy and senescence, cell proliferation and tumor progression. Phosphorylates ATM, CASP6, LATS1, PPP1R12A and p53/TP53. Acts as a regulator of cellular senescence and cellular ploidy by mediating phosphorylation of 'Ser-464' of LATS1, thereby controlling its stability. Controls cell adhesion by regulating activity of the myosin protein phosphatase 1 (PP1) complex. Acts by mediating phosphorylation of PPP1R12A subunit of myosin PP1: phosphorylated PPP1R12A then interacts with 14-3-3, leading to reduced dephosphorylation of myosin MLC2 by myosin PP1. May be involved in DNA damage response: phosphorylates p53/TP53 at 'Ser-15' and 'Ser-392' and is recruited to the CDKN1A/WAF1 promoter to participate in transcription activation by p53/TP53. May also act as a tumor malignancy-associated factor by promoting tumor invasion and metastasis under regulation and phosphorylation by AKT1. Suppresses Fas-induced apoptosis by mediating phosphorylation of CASP6, thereby suppressing the activation of the caspase and the subsequent cleavage of CFLAR. Regulates UV radiation-induced DNA damage response mediated by CDKN1A. In association with STK11, phosphorylates CDKN1A in response to UV radiation and contributes to its degradation which is necessary for optimal DNA repair. The chain is NUAK family SNF1-like kinase 1 (NUAK1) from Homo sapiens (Human).